The following is a 115-amino-acid chain: MNMLLVLLVNSILSLLLILIAFWLPQLNMYNEKANSYECGFDPMGSARLPFSMKFFLVAITFLLFDLEIALLLPLPWAIQMTNINTMTLTSFILISVLALGLAYEWLQKGLEWTE.

3 consecutive transmembrane segments (helical) span residues 4-24, 55-75, and 87-107; these read LLVL…AFWL, FFLV…LLPL, and MTLT…YEWL.

Belongs to the complex I subunit 3 family. As to quaternary structure, core subunit of respiratory chain NADH dehydrogenase (Complex I) which is composed of 45 different subunits. Interacts with TMEM186. Interacts with TMEM242.

Its subcellular location is the mitochondrion inner membrane. The catalysed reaction is a ubiquinone + NADH + 5 H(+)(in) = a ubiquinol + NAD(+) + 4 H(+)(out). Core subunit of the mitochondrial membrane respiratory chain NADH dehydrogenase (Complex I) which catalyzes electron transfer from NADH through the respiratory chain, using ubiquinone as an electron acceptor. Essential for the catalytic activity of complex I. The polypeptide is NADH-ubiquinone oxidoreductase chain 3 (Peromyscus eremicus (Cactus mouse)).